A 204-amino-acid polypeptide reads, in one-letter code: Cytochrome c biogenesis ATP-binding export protein CcmA (204 aa).

An ABC transporter domain is found at 2–202 (LEIRNVTCIR…DSNELKKIRL (201 aa)). 34 to 41 (GQNGAGKT) lines the ATP pocket.

It belongs to the ABC transporter superfamily. CcmA exporter (TC 3.A.1.107) family. The complex is composed of two ATP-binding proteins (CcmA) and two transmembrane proteins (CcmB).

The protein resides in the cell inner membrane. The enzyme catalyses heme b(in) + ATP + H2O = heme b(out) + ADP + phosphate + H(+). Functionally, part of the ABC transporter complex CcmAB involved in the biogenesis of c-type cytochromes; once thought to export heme, this seems not to be the case, but its exact role is uncertain. Responsible for energy coupling to the transport system. The sequence is that of Cytochrome c biogenesis ATP-binding export protein CcmA from Aliivibrio fischeri (strain ATCC 700601 / ES114) (Vibrio fischeri).